Consider the following 247-residue polypeptide: Putative methyltransferase YqeM (247 aa).

The protein belongs to the methyltransferase superfamily.

In terms of biological role, may be a S-adenosyl-L-methionine (SAM)-dependent methyltransferase. This Bacillus subtilis (strain 168) protein is Putative methyltransferase YqeM (yqeM).